Consider the following 155-residue polypeptide: RNA pyrophosphohydrolase (155 aa).

The region spanning 5 to 147 (KYRPNVAAII…KRQVYRQVIA (143 aa)) is the Nudix hydrolase domain. The short motif at 42 to 63 (GGIDEGETPLEALYRELLEEIG) is the Nudix box element.

Belongs to the Nudix hydrolase family. RppH subfamily. Requires a divalent metal cation as cofactor.

In terms of biological role, accelerates the degradation of transcripts by removing pyrophosphate from the 5'-end of triphosphorylated RNA, leading to a more labile monophosphorylated state that can stimulate subsequent ribonuclease cleavage. This Helicobacter pylori (strain P12) protein is RNA pyrophosphohydrolase.